A 145-amino-acid chain; its full sequence is Deoxyuridine 5'-triphosphate nucleotidohydrolase (145 aa).

Substrate is bound by residues 62–64, Asn75, 79–81, and Lys89; these read RSG and TVD.

Belongs to the dUTPase family. Mg(2+) serves as cofactor.

It catalyses the reaction dUTP + H2O = dUMP + diphosphate + H(+). It functions in the pathway pyrimidine metabolism; dUMP biosynthesis; dUMP from dCTP (dUTP route): step 2/2. Its function is as follows. This enzyme is involved in nucleotide metabolism: it produces dUMP, the immediate precursor of thymidine nucleotides and it decreases the intracellular concentration of dUTP so that uracil cannot be incorporated into DNA. This chain is Deoxyuridine 5'-triphosphate nucleotidohydrolase, found in Helicobacter pylori (strain J99 / ATCC 700824) (Campylobacter pylori J99).